The sequence spans 253 residues: Tetraspanin-3 (253 aa).

At 1-11 (MGQCGITSSKT) the chain is on the cytoplasmic side. Residues 12-32 (VLVFLNLIFWGAAGILCYVGA) traverse the membrane as a helical segment. At 33-50 (YVFITYDDYDHFFEDVYT) the chain is on the extracellular side. The chain crosses the membrane as a helical span at residues 51-71 (LIPAVVIIAVGALLFIIGLIG). Topologically, residues 72 to 85 (CCATIRESRCGLAT) are cytoplasmic. A helical transmembrane segment spans residues 86-106 (FVIILLLVFVTEVVVVVLGYV). Residues 107–212 (YRAKVENEVD…KKLQEIMMHV (106 aa)) lie on the Extracellular side of the membrane. N127, N152, N167, and N183 each carry an N-linked (GlcNAc...) asparagine glycan. A helical membrane pass occupies residues 213 to 233 (IWAALAFAAIQLLGMLCACIV). At 234–253 (LCRRSRDPAYELLITGGAYA) the chain is on the cytoplasmic side.

Belongs to the tetraspanin (TM4SF) family. In terms of assembly, interacts with claudin-11/CLDN11 and integrins.

It is found in the membrane. Functionally, regulates the proliferation and migration of oligodendrocytes, a process essential for normal myelination and repair. This Bos taurus (Bovine) protein is Tetraspanin-3 (TSPAN3).